A 560-amino-acid polypeptide reads, in one-letter code: Putative protease Do-like 11, mitochondrial (560 aa).

The N-terminal 65 residues, 1–65, are a transit peptide targeting the mitochondrion; the sequence is MFFRPCVHTV…RRSSTSAAER (65 aa). Residues 117 to 302 are serine protease; the sequence is TEYSKSKPWK…ESRQYSCFGS (186 aa). Residues histidine 150, aspartate 184, and serine 258 each act as charge relay system in the active site. The PDZ domain maps to 288 to 384; sequence ITSVQESRQY…YLVSMKKPGE (97 aa).

This sequence belongs to the peptidase S1C family.

It localises to the mitochondrion membrane. In terms of biological role, putative serine protease. In Arabidopsis thaliana (Mouse-ear cress), this protein is Putative protease Do-like 11, mitochondrial (DEGP11).